We begin with the raw amino-acid sequence, 107 residues long: uncharacterized protein (107 aa).

This is an uncharacterized protein from Pasteurella multocida (strain Pm70).